A 454-amino-acid polypeptide reads, in one-letter code: MPRCPAGAMDEGPVDLRTRPKAAGLPGAALPLRKRPLRAPSPEPAAPRGAAGLVVPLDPLRGGCDLPAVPGPPHGLARPEALYYPGALLPLYPTRAMGSPFPLVNLPTPLYPMMCPMEHPLSADIAMATRADEDGDTPLHIAVVQGNLPAVHRLVNLFQQGGRELDIYNNLRQTPLHLAVITTLPSVVRLLVTAGASPMALDRHGQTAAHLACEHRSPTCLRALLDSAAPGTLDLEARNYDGLTALHVAVNTECQETVQLLLERGADIDAVDIKSGRSPLIHAVENNSLSMVQLLLQHGANVNAQMYSGSSALHSASGRGLLPLVRTLVRSGADSSLKNCHNDTPLMVARSRRVIDILRGKATRPASTSQPDPSPDRSANTSPESSSRLSSNGLLSASPSSSPSQSPPRDPPGFPMAPPNFFLPSPSPPAFLPFAGVLRGPGRPVPPSPAPGGS.

Residues 1 to 50 (MPRCPAGAMDEGPVDLRTRPKAAGLPGAALPLRKRPLRAPSPEPAAPRGA) form a disordered region. The span at 21–31 (KAAGLPGAALP) shows a compositional bias: low complexity. S41 carries the phosphoserine modification. 7 ANK repeats span residues 134–163 (DGDT…QGGR), 171–200 (LRQT…SPMA), 204–235 (HGQT…TLDL), 241–270 (DGLT…DIDA), 275–304 (SGRS…NVNA), 308–337 (SGSS…DSSL), and 338–367 (KNCH…RPAS). The interval 360 to 454 (GKATRPASTS…VPPSPAPGGS (95 aa)) is disordered. Over residues 365 to 381 (PASTSQPDPSPDRSANT) the composition is skewed to polar residues. S374 bears the Phosphoserine mark. Over residues 382-404 (SPESSSRLSSNGLLSASPSSSPS) the composition is skewed to low complexity. S402 and S406 each carry phosphoserine; by GSK3. Pro residues predominate over residues 405–418 (QSPPRDPPGFPMAP). Low complexity predominate over residues 432–442 (LPFAGVLRGPG). Pro residues predominate over residues 443 to 454 (RPVPPSPAPGGS).

In terms of assembly, component of a complex consisting of the NF-kappa-B p52-p52 homodimer and BCL3. Component of a complex consisting of the NF-kappa-B p50-p50 homodimer and BCL3. Interacts with N4BP2, COPS5 and PIR. Interacts with CYLD. In terms of processing, polyubiquitinated. Ubiquitination via 'Lys-63'-linked ubiquitin chains is required for nuclear accumulation. Deubiquitinated by CYLD, which acts on 'Lys-63'-linked ubiquitin chains. Deubiquitination by CYLD prevents nuclear accumulation. Post-translationally, activated by phosphorylation.

Its subcellular location is the nucleus. It is found in the cytoplasm. It localises to the perinuclear region. In terms of biological role, contributes to the regulation of transcriptional activation of NF-kappa-B target genes. In the cytoplasm, inhibits the nuclear translocation of the NF-kappa-B p50 subunit. In the nucleus, acts as transcriptional activator that promotes transcription of NF-kappa-B target genes. Contributes to the regulation of cell proliferation. In Homo sapiens (Human), this protein is B-cell lymphoma 3 protein (BCL3).